We begin with the raw amino-acid sequence, 524 residues long: Chromosomal replication initiator protein DnaA (524 aa).

A domain I, interacts with DnaA modulators region spans residues 1–105 (MSQNSSSLLE…EQEIPETPAQ (105 aa)). The tract at residues 95–183 (PEQEIPETPA…PAHNPNREVS (89 aa)) is disordered. Positions 106 to 182 (QEFKYQPDAP…TPAHNPNREV (77 aa)) are domain II. Residues 148-158 (APEPHPAPIAD) show a composition bias toward pro residues. Residues 183-399 (SLNPKYTFES…GALIRVSAYS (217 aa)) form a domain III, AAA+ region region. Glycine 227, glycine 229, lysine 230, and threonine 231 together coordinate ATP. Residues 400–524 (SLINQPIDKE…TQLIKSRGRN (125 aa)) form a domain IV, binds dsDNA region.

It belongs to the DnaA family. Oligomerizes as a right-handed, spiral filament on DNA at oriC.

The protein localises to the cytoplasm. Its function is as follows. Plays an essential role in the initiation and regulation of chromosomal replication. ATP-DnaA binds to the origin of replication (oriC) to initiate formation of the DNA replication initiation complex once per cell cycle. Binds the DnaA box (a 9 base pair repeat at the origin) and separates the double-stranded (ds)DNA. Forms a right-handed helical filament on oriC DNA; dsDNA binds to the exterior of the filament while single-stranded (ss)DNA is stabiized in the filament's interior. The ATP-DnaA-oriC complex binds and stabilizes one strand of the AT-rich DNA unwinding element (DUE), permitting loading of DNA polymerase. After initiation quickly degrades to an ADP-DnaA complex that is not apt for DNA replication. Binds acidic phospholipids. In Corynebacterium glutamicum (strain R), this protein is Chromosomal replication initiator protein DnaA.